The chain runs to 874 residues: Leucine--tRNA ligase (874 aa).

Residues 43-53 carry the 'HIGH' region motif; the sequence is PYPSGRIHIGH. A disordered region spans residues 614-634; the sequence is LDDGSPVTVGPPEKMSKSKKN. The 'KMSKS' region signature appears at 627–631; sequence KMSKS. Residue lysine 630 coordinates ATP.

Belongs to the class-I aminoacyl-tRNA synthetase family.

The protein localises to the cytoplasm. The catalysed reaction is tRNA(Leu) + L-leucine + ATP = L-leucyl-tRNA(Leu) + AMP + diphosphate. The chain is Leucine--tRNA ligase from Azorhizobium caulinodans (strain ATCC 43989 / DSM 5975 / JCM 20966 / LMG 6465 / NBRC 14845 / NCIMB 13405 / ORS 571).